The following is a 221-amino-acid chain: uncharacterized protein (221 aa).

The segment at residues 77 to 96 (YRERAVELGVPERAILVEPN) is a DNA-binding region (H-T-H motif).

The protein to E.coli YdcF.

Its function is as follows. The imp locus inhibits the extrachromosomal maintenance of the streptomyces plasmid SLP1. May function as a transcriptional activator. This is an uncharacterized protein from Streptomyces coelicolor (strain ATCC BAA-471 / A3(2) / M145).